Consider the following 256-residue polypeptide: Small ribosomal subunit protein uS2 (256 aa).

The protein belongs to the universal ribosomal protein uS2 family.

The polypeptide is Small ribosomal subunit protein uS2 (Streptococcus agalactiae serotype III (strain NEM316)).